Reading from the N-terminus, the 215-residue chain is MIYLNNVILNDKTLPMCFNLNVKAGERVAIIGESGAGKSTLLNLIAGFEFPAQGEIWLNDKNHTRSAPYERPVSMLFQENNLFPHLTVQQNLALGIKPSLKLTALEQEKIEQAACSVGLGDYLERLPNSLSGGQKQRVALARCLLRDKPILLLDEPFSALDQKLRVEMLALIAKLCDEKDLTLLLVTHQPSELIGSIDQVLVVENGQISQLQKGV.

The region spanning I2 to V215 is the ABC transporter domain. G32–S39 contacts ATP.

The protein belongs to the ABC transporter superfamily. Thiamine importer (TC 3.A.1.19.1) family. The complex is composed of two ATP-binding proteins (ThiQ), two transmembrane proteins (ThiP) and a solute-binding protein (ThiB).

It is found in the cell inner membrane. It catalyses the reaction thiamine(out) + ATP + H2O = thiamine(in) + ADP + phosphate + H(+). Its function is as follows. Part of the ABC transporter complex ThiBPQ involved in thiamine import. Responsible for energy coupling to the transport system. The protein is Thiamine import ATP-binding protein ThiQ of Haemophilus influenzae (strain 86-028NP).